The chain runs to 460 residues: MPSLKSFSAAEEEDDQLGRNSEAERFNPEAVEKEEDPDKMDEKDESGDEEDDVKRDQVEAEDEEALGEEEDSKERSQSSSAGELSESEYMVVDLADICKDVQCSICLGIIRKTRTVMECLHRFCRECIDKSMRLGNNECPTCRKHCASRRSLRDDPNFDALIAALFKNIDKFEEEELNFRQDDEARNKQIQASIAQVSQRQSKALVKRKSVGKGTAILSRSRRSGGGSRRRRNCRNIEQDTSEANDDDDQNKRGKDSSSDEPCERQRKKRSATQPSSSNANNNDNCAGNGTEQTHQRDSRVISPVLVWNSELIAWGRGGTRSNTRQGNNNQGAISKRNARLKRLVEYLGSLEGNSVELDIHLKLVSLDTEGLLNLHEPYLCFRPTLLVKQLREYVARHLKLKAEEVELLVSKDGDTVIGNKTSTEKMQSLQDDETVAKLKVDCISSNGYMIVVYRRKQIA.

The tract at residues 1–85 (MPSLKSFSAA…SQSSSAGELS (85 aa)) is disordered. Positions 21–31 (SEAERFNPEAV) are enriched in basic and acidic residues. 2 stretches are compositionally biased toward acidic residues: residues 32-51 (EKEE…DEED) and 59-71 (EAED…EEED). An RING-type zinc finger spans residues 103-143 (CSICLGIIRKTRTVMECLHRFCRECIDKSMRLGNNECPTCR). Positions 196–300 (QVSQRQSKAL…TEQTHQRDSR (105 aa)) are disordered. Basic residues predominate over residues 220–234 (RSRRSGGGSRRRRNC). Positions 240–249 (DTSEANDDDD) are enriched in acidic residues. Residues 250 to 265 (QNKRGKDSSSDEPCER) show a composition bias toward basic and acidic residues. The segment covering 276–290 (SSSNANNNDNCAGNG) has biased composition (low complexity).

In terms of assembly, heterodimer with RING1A. Interacts with CLF. Component of the PRC1-like complex, at least composed of RING1A, RING1B and LHP1.

It localises to the nucleus. The catalysed reaction is S-ubiquitinyl-[E2 ubiquitin-conjugating enzyme]-L-cysteine + [acceptor protein]-L-lysine = [E2 ubiquitin-conjugating enzyme]-L-cysteine + N(6)-ubiquitinyl-[acceptor protein]-L-lysine.. The protein operates within protein modification; protein ubiquitination. Its function is as follows. Putative E3 ubiquitin-protein ligase that mediates monoubiquitination of 'Lys-119' of histone H2A (H2AK119ub), thereby playing a central role in histone code and gene regulation. As part of the PRC1-like complex, repress class I KNOX gene expression. PcG PRC1 complex maintains the transcriptionally repressive state of many genes, including Hox genes, throughout development. PcG PRC1 complex acts via chromatin remodeling and modification of histones, rendering chromatin heritably changed in its expressibility. The sequence is that of Putative E3 ubiquitin-protein ligase RING1b (RING1B) from Arabidopsis thaliana (Mouse-ear cress).